The sequence spans 502 residues: Glycerol kinase (502 aa).

T14 lines the ADP pocket. The ATP site is built by T14, T15, and S16. Residue T14 participates in sn-glycerol 3-phosphate binding. Position 18 (R18) interacts with ADP. R84, E85, Y136, and D246 together coordinate sn-glycerol 3-phosphate. Residues R84, E85, Y136, D246, and Q247 each contribute to the glycerol site. 2 residues coordinate ADP: T268 and G311. Residues T268, G311, Q315, and G412 each coordinate ATP. ADP is bound by residues G412 and N416.

It belongs to the FGGY kinase family. Homotetramer and homodimer (in equilibrium). Heterodimer with EIIA-Glc. Binds 1 zinc ion per glycerol kinase EIIA-Glc dimer. The zinc ion is important for dimerization.

It catalyses the reaction glycerol + ATP = sn-glycerol 3-phosphate + ADP + H(+). It participates in polyol metabolism; glycerol degradation via glycerol kinase pathway; sn-glycerol 3-phosphate from glycerol: step 1/1. With respect to regulation, activity of this regulatory enzyme is affected by several metabolites. Allosterically and non-competitively inhibited by fructose 1,6-bisphosphate (FBP) and unphosphorylated phosphocarrier protein EIIA-Glc (III-Glc), an integral component of the bacterial phosphotransferase (PTS) system. Key enzyme in the regulation of glycerol uptake and metabolism. Catalyzes the phosphorylation of glycerol to yield sn-glycerol 3-phosphate. This chain is Glycerol kinase, found in Shigella boydii serotype 18 (strain CDC 3083-94 / BS512).